Reading from the N-terminus, the 356-residue chain is Pyrimidine monooxygenase RutA (356 aa).

Residues 49 to 50 (IK), N115, E124, 140 to 141 (RY), and S190 contribute to the FMN site.

This sequence belongs to the NtaA/SnaA/DszA monooxygenase family. RutA subfamily.

The catalysed reaction is uracil + FMNH2 + NADH + O2 = (Z)-3-ureidoacrylate + FMN + NAD(+) + H2O + H(+). It carries out the reaction thymine + FMNH2 + NADH + O2 = (Z)-2-methylureidoacrylate + FMN + NAD(+) + H2O + H(+). In terms of biological role, catalyzes the pyrimidine ring opening between N-3 and C-4 by an unusual flavin hydroperoxide-catalyzed mechanism, adding oxygen atoms in the process to yield ureidoacrylate peracid, that immediately reacts with FMN forming ureidoacrylate and FMN-N(5)-oxide. The FMN-N(5)-oxide reacts spontaneously with NADH to produce FMN. Requires the flavin reductase RutF to regenerate FMN in vivo. This Haliangium ochraceum (strain DSM 14365 / JCM 11303 / SMP-2) protein is Pyrimidine monooxygenase RutA.